A 171-amino-acid chain; its full sequence is Putative RING finger protein 027R (171 aa).

The RING-type zinc-finger motif lies at 121–163; that stretch reads CAVCMTNPVWVDFVWSCKHISTCIKCLKMLSRGSNGFKCPICR.

Belongs to the IIV-6 157L family.

The protein is Putative RING finger protein 027R of Aedes vexans (Inland floodwater mosquito).